The sequence spans 600 residues: Novobiocin biosynthesis protein H (600 aa).

A disordered region spans residues 505-526 (GGKTDRAGLPDPVKATQPAGLG). Residues 526 to 600 (GPRTPAEKVL…QLAAIATLEE (75 aa)) enclose the Carrier domain. Serine 561 carries the post-translational modification O-(pantetheine 4'-phosphoryl)serine.

Belongs to the ATP-dependent AMP-binding enzyme family.

The protein operates within antibiotic biosynthesis; novobiocin biosynthesis. Its function is as follows. Together with NovI, involved in the formation of a beta-OH-Tyr intermediate in the novobiocin biosynthesis pathway, an aminocoumarin family antibiotic that targets bacterial DNA gyrases. The ATP-dependent AMP-binding region activates L-Tyr as L-tyrosyl-AMP and then transfers the L-tyrosyl group to the acyl carrier domain through thioester formation to form a tyrosyl-S intermediate that is covalently tethered to NovH (L-Tyr-S-NovH). The protein is Novobiocin biosynthesis protein H (novH) of Streptomyces niveus (Streptomyces spheroides).